The primary structure comprises 575 residues: Cytoskeleton-associated protein 4 (575 aa).

Positions 1–73 (MPSAKQRGSK…RGRSSAATAN (73 aa)) are disordered. Residues 1–85 (MPSAKQRGSK…SASCSRRLGR (85 aa)) lie on the Cytoplasmic side of the membrane. Residues Ser3, Ser17, and Ser19 each carry the phosphoserine modification. Lys21 carries the post-translational modification N6-acetyllysine. Positions 37–53 (PAAPQQPQPPAPHPPQH) are enriched in pro residues. The S-palmitoyl cysteine; by ZDHHC2 moiety is linked to residue Cys79. A helical membrane pass occupies residues 86-108 (VLNFLFYLSLVAAAAFSGWYVHH). The Extracellular portion of the chain corresponds to 109 to 575 (VLEEVQQVRR…LKVEKIHEKI (467 aa)). Residues 125–193 (RQRDELGQGL…QKLQNEILKD (69 aa)) are a coiled coil. Ser211, Ser292, and Ser367 each carry phosphoserine. Coiled-coil stretches lie at residues 236–438 (DVQK…VGNL) and 507–575 (SSLD…HEKI).

In terms of assembly, interacts with REEP5. In terms of processing, reversibly palmitoylated. Palmitoylation at Cys-79 by DHHC2 is required for its trafficking from the ER to the plasma membrane and for its perinuclear localization. Increased phosphorylation during mitosis prevents binding to microtubules. As to expression, expressed in cardiomyocytes (at protein level).

The protein resides in the endoplasmic reticulum membrane. Its subcellular location is the cell membrane. It localises to the cytoplasm. The protein localises to the cytoskeleton. It is found in the perinuclear region. Functionally, high-affinity epithelial cell surface receptor for APF. Its function is as follows. Mediates the anchoring of the endoplasmic reticulum to microtubules. The protein is Cytoskeleton-associated protein 4 (Ckap4) of Mus musculus (Mouse).